The primary structure comprises 424 residues: Imidazolonepropionase (424 aa).

Fe(3+) contacts are provided by His84 and His86. Residues His84 and His86 each coordinate Zn(2+). Positions 93, 156, and 189 each coordinate 4-imidazolone-5-propanoate. Residue Tyr156 participates in N-formimidoyl-L-glutamate binding. Position 254 (His254) interacts with Fe(3+). His254 contacts Zn(2+). Position 257 (Glu257) interacts with 4-imidazolone-5-propanoate. Residue Asp328 participates in Fe(3+) binding. A Zn(2+)-binding site is contributed by Asp328. 2 residues coordinate N-formimidoyl-L-glutamate: Asn330 and Gly332. Ser333 contacts 4-imidazolone-5-propanoate.

It belongs to the metallo-dependent hydrolases superfamily. HutI family. Zn(2+) is required as a cofactor. Fe(3+) serves as cofactor.

Its subcellular location is the cytoplasm. It catalyses the reaction 4-imidazolone-5-propanoate + H2O = N-formimidoyl-L-glutamate. Its pathway is amino-acid degradation; L-histidine degradation into L-glutamate; N-formimidoyl-L-glutamate from L-histidine: step 3/3. Catalyzes the hydrolytic cleavage of the carbon-nitrogen bond in imidazolone-5-propanoate to yield N-formimidoyl-L-glutamate. It is the third step in the universal histidine degradation pathway. In Geobacillus thermodenitrificans (strain NG80-2), this protein is Imidazolonepropionase.